We begin with the raw amino-acid sequence, 146 residues long: Acireductone dioxygenase (146 aa).

H71, H73, E77, and H116 together coordinate Fe(2+). Ni(2+) is bound by residues H71, H73, E77, and H116.

Belongs to the acireductone dioxygenase (ARD) family. The cofactor is Fe(2+). Ni(2+) is required as a cofactor.

The protein localises to the cytoplasm. It localises to the nucleus. The enzyme catalyses 1,2-dihydroxy-5-(methylsulfanyl)pent-1-en-3-one + O2 = 4-methylsulfanyl-2-oxobutanoate + formate + 2 H(+). The catalysed reaction is 1,2-dihydroxy-5-(methylsulfanyl)pent-1-en-3-one + O2 = 3-(methylsulfanyl)propanoate + CO + formate + 2 H(+). The protein operates within amino-acid biosynthesis; L-methionine biosynthesis via salvage pathway; L-methionine from S-methyl-5-thio-alpha-D-ribose 1-phosphate: step 5/6. Its function is as follows. Catalyzes 2 different reactions between oxygen and the acireductone 1,2-dihydroxy-3-keto-5-methylthiopentene (DHK-MTPene) depending upon the metal bound in the active site. Fe-containing acireductone dioxygenase (Fe-ARD) produces formate and 2-keto-4-methylthiobutyrate (KMTB), the alpha-ketoacid precursor of methionine in the methionine recycle pathway. Ni-containing acireductone dioxygenase (Ni-ARD) produces methylthiopropionate, carbon monoxide and formate, and does not lie on the methionine recycle pathway. The protein is Acireductone dioxygenase of Heterostelium pallidum (strain ATCC 26659 / Pp 5 / PN500) (Cellular slime mold).